We begin with the raw amino-acid sequence, 244 residues long: tRNA (guanine-N(1)-)-methyltransferase (244 aa).

Residues glycine 113 and 132 to 137 (IGDYVL) contribute to the S-adenosyl-L-methionine site.

This sequence belongs to the RNA methyltransferase TrmD family. As to quaternary structure, homodimer.

It localises to the cytoplasm. It catalyses the reaction guanosine(37) in tRNA + S-adenosyl-L-methionine = N(1)-methylguanosine(37) in tRNA + S-adenosyl-L-homocysteine + H(+). Functionally, specifically methylates guanosine-37 in various tRNAs. The polypeptide is tRNA (guanine-N(1)-)-methyltransferase (Shouchella clausii (strain KSM-K16) (Alkalihalobacillus clausii)).